The chain runs to 294 residues: PAK4-inhibitor INKA2 (294 aa).

Disordered regions lie at residues 50–143 (ISGG…STLM), 170–198 (PELE…RELG), and 223–290 (LKEK…DINT). Polar residues predominate over residues 85-99 (SPSNQASLGSTSSGK). The interval 134-177 (EPDDWTSTLMSRGRNRQPLVLGDNVFADLVGNWLDLPELEKGGE) is inka box. Over residues 171–198 (ELEKGGEKGETGEAGEPKGGRGQPRELG) the composition is skewed to basic and acidic residues. Positions 241 to 253 (RSQKVKKRSHSKG) are enriched in basic residues.

This sequence belongs to the INKA family. As to quaternary structure, interacts with PAK4.

The protein localises to the nucleus. Its function is as follows. Inhibitor of the serine/threonine-protein kinase PAK4. Acts by binding PAK4 in a substrate-like manner, inhibiting the protein kinase activity. The protein is PAK4-inhibitor INKA2 of Bos taurus (Bovine).